The sequence spans 366 residues: Chorismate synthase (366 aa).

Arg48 is a binding site for NADP(+). Residues 125 to 127 (RSS), 238 to 239 (NA), Gly278, 293 to 297 (KPTSS), and Arg319 contribute to the FMN site.

It belongs to the chorismate synthase family. As to quaternary structure, homotetramer. FMNH2 is required as a cofactor.

It catalyses the reaction 5-O-(1-carboxyvinyl)-3-phosphoshikimate = chorismate + phosphate. The protein operates within metabolic intermediate biosynthesis; chorismate biosynthesis; chorismate from D-erythrose 4-phosphate and phosphoenolpyruvate: step 7/7. Catalyzes the anti-1,4-elimination of the C-3 phosphate and the C-6 proR hydrogen from 5-enolpyruvylshikimate-3-phosphate (EPSP) to yield chorismate, which is the branch point compound that serves as the starting substrate for the three terminal pathways of aromatic amino acid biosynthesis. This reaction introduces a second double bond into the aromatic ring system. The sequence is that of Chorismate synthase from Alkalilimnicola ehrlichii (strain ATCC BAA-1101 / DSM 17681 / MLHE-1).